We begin with the raw amino-acid sequence, 26 residues long: Phospholipase A2 homolog A1 (26 aa).

Contains 7 disulfide bonds. In terms of tissue distribution, expressed by the venom gland.

It localises to the secreted. The polypeptide is Phospholipase A2 homolog A1 (Micrurus pyrrhocryptus (Coral snake)).